The chain runs to 473 residues: Serine palmitoyltransferase 1 (473 aa).

Over 1–15 (MAMAAEQWVLVEMVQ) the chain is Lumenal. Positions 1 to 66 (MAMAAEQWVL…KEELIEEWQP (66 aa)) are interaction with SPTLC2. The chain crosses the membrane as a helical span at residues 16–36 (ALYEAPAYHLILEGILILWII). Topologically, residues 37–473 (RLVFSKTYKL…IREAAQAVLL (437 aa)) are cytoplasmic. Position 164 is a phosphotyrosine; by ABL (Tyr164).

Belongs to the class-II pyridoxal-phosphate-dependent aminotransferase family. Component of the serine palmitoyltransferase (SPT) complex, which is also composed of SPTLC2 or SPTLC3 and SPTSSA or SPTSSB. The heterodimer with SPTLC2 or SPTLC3 forms the catalytic core of the enzyme, while SPTSSA or SPTSSB subunits determine substrate specificity. SPT also interacts with ORMDL proteins, especially ORMDL3, which negatively regulate SPT activity in the presence of ceramides. Forms dimers of heterodimers with SPTLC2. Interacts with RTN4. Pyridoxal 5'-phosphate serves as cofactor. In terms of processing, phosphorylation at Tyr-164 inhibits activity and promotes cell survival.

The protein resides in the endoplasmic reticulum membrane. It carries out the reaction L-serine + hexadecanoyl-CoA + H(+) = 3-oxosphinganine + CO2 + CoA. The enzyme catalyses octadecanoyl-CoA + L-serine + H(+) = 3-oxoeicosasphinganine + CO2 + CoA. The catalysed reaction is tetradecanoyl-CoA + L-serine + H(+) = 3-oxohexadecasphinganine + CO2 + CoA. It catalyses the reaction dodecanoyl-CoA + L-serine + H(+) = 3-oxotetradecasphinganine + CO2 + CoA. Its pathway is lipid metabolism; sphingolipid metabolism. With respect to regulation, SPT complex catalytic activity is negatively regulated by ORMDL proteins, including ORMDL3, in the presence of ceramides. This mechanism allows to maintain ceramide levels at sufficient concentrations for the production of complex sphingolipids, but which prevents the accumulation of ceramides to levels that trigger apoptosis. Its function is as follows. Component of the serine palmitoyltransferase multisubunit enzyme (SPT) that catalyzes the initial and rate-limiting step in sphingolipid biosynthesis by condensing L-serine and activated acyl-CoA (most commonly palmitoyl-CoA) to form long-chain bases. The SPT complex is also composed of SPTLC2 or SPTLC3 and SPTSSA or SPTSSB. Within this complex, the heterodimer with SPTLC2 or SPTLC3 forms the catalytic core. The composition of the serine palmitoyltransferase (SPT) complex determines the substrate preference. The SPTLC1-SPTLC2-SPTSSA complex shows a strong preference for C16-CoA substrate, while the SPTLC1-SPTLC3-SPTSSA isozyme uses both C14-CoA and C16-CoA as substrates, with a slight preference for C14-CoA. The SPTLC1-SPTLC2-SPTSSB complex shows a strong preference for C18-CoA substrate, while the SPTLC1-SPTLC3-SPTSSB isozyme displays an ability to use a broader range of acyl-CoAs, without apparent preference. Required for adipocyte cell viability and metabolic homeostasis. This chain is Serine palmitoyltransferase 1 (SPTLC1), found in Cricetulus griseus (Chinese hamster).